A 142-amino-acid polypeptide reads, in one-letter code: Succinate dehydrogenase assembly factor 2, mitochondrial (142 aa).

The protein belongs to the SDHAF2 family. Interacts with the flavoprotein subunit within the SDH catalytic dimer.

It localises to the mitochondrion matrix. Plays an essential role in the assembly of succinate dehydrogenase (SDH), an enzyme complex (also referred to as respiratory complex II) that is a component of both the tricarboxylic acid (TCA) cycle and the mitochondrial electron transport chain, and which couples the oxidation of succinate to fumarate with the reduction of ubiquinone (coenzyme Q) to ubiquinol. Required for flavinylation (covalent attachment of FAD) of the flavoprotein subunit of the SDH catalytic dimer. The chain is Succinate dehydrogenase assembly factor 2, mitochondrial from Debaryomyces hansenii (strain ATCC 36239 / CBS 767 / BCRC 21394 / JCM 1990 / NBRC 0083 / IGC 2968) (Yeast).